A 393-amino-acid chain; its full sequence is S-adenosylmethionine synthase (393 aa).

H16 serves as a coordination point for ATP. D18 serves as a coordination point for Mg(2+). K(+) is bound at residue E44. Residues E57 and Q100 each coordinate L-methionine. The segment at 100–110 (QSNDIAQGVDH) is flexible loop. Residues 167-169 (DAK), 238-239 (RF), D247, 253-254 (RK), A270, and K274 each bind ATP. Residue D247 coordinates L-methionine. An L-methionine-binding site is contributed by K278.

This sequence belongs to the AdoMet synthase family. In terms of assembly, homotetramer; dimer of dimers. Mg(2+) is required as a cofactor. It depends on K(+) as a cofactor.

It localises to the cytoplasm. It carries out the reaction L-methionine + ATP + H2O = S-adenosyl-L-methionine + phosphate + diphosphate. It functions in the pathway amino-acid biosynthesis; S-adenosyl-L-methionine biosynthesis; S-adenosyl-L-methionine from L-methionine: step 1/1. Its function is as follows. Catalyzes the formation of S-adenosylmethionine (AdoMet) from methionine and ATP. The overall synthetic reaction is composed of two sequential steps, AdoMet formation and the subsequent tripolyphosphate hydrolysis which occurs prior to release of AdoMet from the enzyme. The chain is S-adenosylmethionine synthase from Polaromonas sp. (strain JS666 / ATCC BAA-500).